A 342-amino-acid chain; its full sequence is Oxygen-dependent coproporphyrinogen-III oxidase (342 aa).

Ser98 contacts substrate. The a divalent metal cation site is built by His102 and His112. Catalysis depends on His112, which acts as the Proton donor. Residue 114 to 116 participates in substrate binding; that stretch reads NYR. 2 residues coordinate a divalent metal cation: His146 and His176. Residues 266–301 form an important for dimerization region; sequence YVEFNLVWDRGTIFGLQTNGRTESILMSLPPLARWE.

Belongs to the aerobic coproporphyrinogen-III oxidase family. As to quaternary structure, homodimer. Requires a divalent metal cation as cofactor.

It is found in the cytoplasm. It carries out the reaction coproporphyrinogen III + O2 + 2 H(+) = protoporphyrinogen IX + 2 CO2 + 2 H2O. It functions in the pathway porphyrin-containing compound metabolism; protoporphyrin-IX biosynthesis; protoporphyrinogen-IX from coproporphyrinogen-III (O2 route): step 1/1. In terms of biological role, involved in the heme and chlorophyll biosynthesis. Catalyzes the aerobic oxidative decarboxylation of propionate groups of rings A and B of coproporphyrinogen-III to yield the vinyl groups in protoporphyrinogen-IX. The sequence is that of Oxygen-dependent coproporphyrinogen-III oxidase from Prochlorococcus marinus (strain MIT 9301).